A 95-amino-acid polypeptide reads, in one-letter code: Large ribosomal subunit protein uL23 (95 aa).

This sequence belongs to the universal ribosomal protein uL23 family. As to quaternary structure, part of the 50S ribosomal subunit. Contacts protein L29, and trigger factor when it is bound to the ribosome.

Its function is as follows. One of the early assembly proteins it binds 23S rRNA. One of the proteins that surrounds the polypeptide exit tunnel on the outside of the ribosome. Forms the main docking site for trigger factor binding to the ribosome. The chain is Large ribosomal subunit protein uL23 from Desulforapulum autotrophicum (strain ATCC 43914 / DSM 3382 / VKM B-1955 / HRM2) (Desulfobacterium autotrophicum).